A 163-amino-acid chain; its full sequence is Nucleotide-binding protein BC_1159 (163 aa).

This sequence belongs to the YajQ family.

Its function is as follows. Nucleotide-binding protein. This Bacillus cereus (strain ATCC 14579 / DSM 31 / CCUG 7414 / JCM 2152 / NBRC 15305 / NCIMB 9373 / NCTC 2599 / NRRL B-3711) protein is Nucleotide-binding protein BC_1159.